Consider the following 277-residue polypeptide: Shikimate dehydrogenase (NADP(+)) (277 aa).

Residues 15–17 (SLS) and Thr62 contribute to the shikimate site. Catalysis depends on Lys66, which acts as the Proton acceptor. The shikimate site is built by Asn87 and Asp102. NADP(+) contacts are provided by residues 127-131 (GAGGA), 151-156 (NRTVSK), and Ile219. A shikimate-binding site is contributed by Tyr221. Residue Gly242 coordinates NADP(+).

Belongs to the shikimate dehydrogenase family. Homodimer.

It carries out the reaction shikimate + NADP(+) = 3-dehydroshikimate + NADPH + H(+). It participates in metabolic intermediate biosynthesis; chorismate biosynthesis; chorismate from D-erythrose 4-phosphate and phosphoenolpyruvate: step 4/7. In terms of biological role, involved in the biosynthesis of the chorismate, which leads to the biosynthesis of aromatic amino acids. Catalyzes the reversible NADPH linked reduction of 3-dehydroshikimate (DHSA) to yield shikimate (SA). This is Shikimate dehydrogenase (NADP(+)) from Geobacillus sp. (strain WCH70).